A 660-amino-acid chain; its full sequence is Protein SCARECROW 2 (660 aa).

Disordered regions lie at residues 1–33 (MGSSSLLLFPSSSSSATHSSYSPSSSSHAITSL) and 190–286 (SDPA…KQRD). The segment covering 192 to 229 (PAPPPPPPSHPALLPPDATAPPPPPTSVAALPPPPPAQ) has biased composition (pro residues). Positions 259-272 (AAAAAAAAAAAAAA) are enriched in low complexity. Residues 262–289 (AAAAAAAAAAAAKERKEEQRRKQRDEEG) adopt a coiled-coil conformation. The segment covering 273 to 286 (AKERKEEQRRKQRD) has biased composition (basic and acidic residues). One can recognise a GRAS domain in the interval 283–653 (KQRDEEGLHL…LCLLTASAWR (371 aa)). Positions 290–354 (LHLLTLLLQC…VSSCLGLYAP (65 aa)) are leucine repeat I (LRI). The LxCxE motif signature appears at 297-301 (LQCAE). The segment at 373–438 (FQVFNGISPF…GGPPRVRLTG (66 aa)) is VHIID. Residues 404 to 408 (VHIID) carry the VHIID motif. Residues 448–480 (ATGKRLSDFADTLGLPFEFCPVADKAGNLDPEK) are leucine repeat II (LRII). Residues 489 to 576 (VAVHWLRHSL…QQLLSREIRN (88 aa)) are PFYRE. The SAW stretch occupies residues 579–653 (AVGGPARTGD…LCLLTASAWR (75 aa)).

It belongs to the GRAS family.

The protein localises to the cytoplasm. Probable transcription factor involved in asmmetric cell division in the cortex/endodermis progenitor cell and in the process of stomata and ligule formation in leaves. The polypeptide is Protein SCARECROW 2 (SCR2) (Oryza sativa subsp. indica (Rice)).